The primary structure comprises 321 residues: Thioredoxin reductase (321 aa).

36 to 43 (TGMEKGGQ) provides a ligand contact to FAD. The cysteines at positions 136 and 139 are disulfide-linked. Position 287 to 296 (287 to 296 (DVMDHIYRQA)) interacts with FAD.

The protein belongs to the class-II pyridine nucleotide-disulfide oxidoreductase family. Homodimer. The cofactor is FAD.

The protein resides in the cytoplasm. It carries out the reaction [thioredoxin]-dithiol + NADP(+) = [thioredoxin]-disulfide + NADPH + H(+). This Escherichia coli O157:H7 protein is Thioredoxin reductase (trxB).